A 94-amino-acid chain; its full sequence is Ubiquitin-like protein ATG12B (94 aa).

Ala2 is modified (N-acetylalanine). Gly94 participates in a covalent cross-link: Glycyl lysine isopeptide (Gly-Lys) (interchain with K-128 in ATG5).

This sequence belongs to the ATG12 family. As to expression, ubiquitous.

The protein resides in the cytoplasm. Its function is as follows. Ubiquitin-like protein involved in cytoplasm to vacuole transport (Cvt) and autophagy vesicles formation. Conjugation with ATG5 through a ubiquitin-like conjugating system involving also ATG7 as an E1-like activating enzyme and ATG10 as an E2-like conjugating enzyme, is essential for its function. ATG12/ATG5 conjugate has an essential role in plant nutrient recycling. The sequence is that of Ubiquitin-like protein ATG12B (ATG12B) from Arabidopsis thaliana (Mouse-ear cress).